The chain runs to 329 residues: tRNA uridine(34) hydroxylase (329 aa).

A Rhodanese domain is found at 123-217 (SDPDVILVDT…YLEEVPEEES (95 aa)). The active-site Cysteine persulfide intermediate is the cysteine 177. The disordered stretch occupies residues 285-329 (REKQVQLSNARGETHVGGDAAHLIDQRKKEKLAHKEQQRSGKKAK). The span at 296–323 (GETHVGGDAAHLIDQRKKEKLAHKEQQR) shows a compositional bias: basic and acidic residues.

The protein belongs to the TrhO family.

It carries out the reaction uridine(34) in tRNA + AH2 + O2 = 5-hydroxyuridine(34) in tRNA + A + H2O. Catalyzes oxygen-dependent 5-hydroxyuridine (ho5U) modification at position 34 in tRNAs. The sequence is that of tRNA uridine(34) hydroxylase from Vibrio atlanticus (strain LGP32) (Vibrio splendidus (strain Mel32)).